Reading from the N-terminus, the 1915-residue chain is Methylcytosine dioxygenase tet3-B (1915 aa).

Residues 28–49 (RLRVSEMPSELNGGGDGSKGDG) are disordered. The CXXC-type zinc-finger motif lies at 61–102 (SNKKRKRCGVCVPCLRKEPCGTCYNCVNRSTSHQICKMRKCE). Zn(2+) is bound by residues cysteine 68, cysteine 71, cysteine 74, cysteine 80, cysteine 83, cysteine 86, cysteine 96, and cysteine 101. Positions 629–638 (PNSQQAPVSK) are enriched in polar residues. 3 disordered regions span residues 629–679 (PNSQ…RVKE), 776–806 (GRCP…VPGQ), and 831–880 (FSLP…LSNN). Basic residues predominate over residues 664–676 (KPPRKQVQIKKPR). Residues 779–793 (PTPSTGDSSSGQGDS) show a composition bias toward low complexity. Polar residues-rich tracts occupy residues 838-854 (VPSQ…TSGV) and 864-880 (QLPS…LSNN). Zn(2+) is bound by residues cysteine 974, cysteine 976, cysteine 1034, histidine 1060, and cysteine 1062. Arginine 1102 lines the 2-oxoglutarate pocket. Zn(2+) contacts are provided by cysteine 1112, cysteine 1114, cysteine 1130, cysteine 1139, and cysteine 1199. Residue cysteine 1215 coordinates 2-oxoglutarate. Histidine 1221 provides a ligand contact to Zn(2+). Positions 1223 and 1225 each coordinate Fe cation. Histidine 1257 serves as a coordination point for 2-oxoglutarate. Disordered regions lie at residues 1298–1356 (LSEP…QTKP), 1469–1516 (GMNQ…APME), and 1719–1753 (PAVN…VKEE). The span at 1308-1339 (RQLDAKKATAEKKKLQKEKLVSPDKTKQEPSD) shows a compositional bias: basic and acidic residues. The segment covering 1340–1355 (TKTCQQNPGVPQQQTK) has biased composition (polar residues). Over residues 1482-1491 (NYRRSSEVPH) the composition is skewed to basic and acidic residues. Composition is skewed to polar residues over residues 1494 to 1503 (SLQNSNSQKS) and 1720 to 1732 (AVNS…SQNH). Histidine 1794 contacts Fe cation. 1809–1811 (RIS) is a 2-oxoglutarate binding site. Residues 1827–1860 (LALWEAKMKQLAERARVKEEEAAKLGIKQEVKSL) adopt a coiled-coil conformation.

It belongs to the TET family. The cofactor is Fe(2+). Requires Zn(2+) as cofactor. In terms of tissue distribution, detected in embryo (at protein level). Detected in embryonic head, in developing brain and eye.

It localises to the nucleus. The protein localises to the chromosome. The enzyme catalyses a 5-methyl-2'-deoxycytidine in DNA + 2-oxoglutarate + O2 = a 5-hydroxymethyl-2'-deoxycytidine in DNA + succinate + CO2. It carries out the reaction a 5-hydroxymethyl-2'-deoxycytidine in DNA + 2-oxoglutarate + O2 = a 5-formyl-2'-deoxycytidine in DNA + succinate + CO2 + H2O. The catalysed reaction is a 5-formyl-2'-deoxycytidine in DNA + 2-oxoglutarate + O2 = a 5-carboxyl-2'-deoxycytidine in DNA + succinate + CO2 + H(+). In terms of biological role, dioxygenase that catalyzes the conversion of the modified genomic base 5-methylcytosine (5mC) into 5-hydroxymethylcytosine (5hmC) and plays a key role in epigenetic chromatin reprogramming during embryonic development. Conversion of 5mC into 5hmC probably constitutes the first step in cytosine demethylation. Selectively binds to the promoter region of target genes and contributes to regulate the expression of numerous developmental genes, including pax6, rax, sox9 and six3. May also contribute to the regulation of target genes in ways that do not require its enzyme activity. This chain is Methylcytosine dioxygenase tet3-B, found in Xenopus laevis (African clawed frog).